We begin with the raw amino-acid sequence, 101 residues long: NADH-quinone oxidoreductase subunit K (101 aa).

3 consecutive transmembrane segments (helical) span residues 5–25, 30–50, and 62–82; these read PNWY…GVLF, IVVL…LVTF, and LVFF…AIVI.

The protein belongs to the complex I subunit 4L family. In terms of assembly, NDH-1 is composed of 14 different subunits. Subunits NuoA, H, J, K, L, M, N constitute the membrane sector of the complex.

It is found in the cell inner membrane. It carries out the reaction a quinone + NADH + 5 H(+)(in) = a quinol + NAD(+) + 4 H(+)(out). NDH-1 shuttles electrons from NADH, via FMN and iron-sulfur (Fe-S) centers, to quinones in the respiratory chain. The immediate electron acceptor for the enzyme in this species is believed to be a menaquinone. Couples the redox reaction to proton translocation (for every two electrons transferred, four hydrogen ions are translocated across the cytoplasmic membrane), and thus conserves the redox energy in a proton gradient. The protein is NADH-quinone oxidoreductase subunit K of Salinibacter ruber (strain DSM 13855 / M31).